The sequence spans 274 residues: NH(3)-dependent NAD(+) synthetase (274 aa).

Residue 46–53 participates in ATP binding; sequence GISGGQDS. Position 52 (Asp52) interacts with Mg(2+). Deamido-NAD(+) is bound at residue Arg140. An ATP-binding site is contributed by Thr160. Glu165 contacts Mg(2+). Deamido-NAD(+) contacts are provided by Lys173 and Asp180. Positions 189 and 211 each coordinate ATP. Residue 260-261 coordinates deamido-NAD(+); the sequence is HK.

The protein belongs to the NAD synthetase family. In terms of assembly, homodimer.

It catalyses the reaction deamido-NAD(+) + NH4(+) + ATP = AMP + diphosphate + NAD(+) + H(+). Its pathway is cofactor biosynthesis; NAD(+) biosynthesis; NAD(+) from deamido-NAD(+) (ammonia route): step 1/1. Functionally, catalyzes the ATP-dependent amidation of deamido-NAD to form NAD. Uses ammonia as a nitrogen source. The protein is NH(3)-dependent NAD(+) synthetase of Streptococcus equi subsp. zooepidemicus (strain H70).